Reading from the N-terminus, the 439-residue chain is Microfibrillar-associated protein 1 (439 aa).

Disordered regions lie at residues 1–27 and 39–200; these read MSVP…NEKG and YVSG…PRLK. Residue Ser-2 is modified to N-acetylserine. Residues Ser-52 and Ser-53 each carry the phosphoserine modification. Basic and acidic residues predominate over residues 61 to 70; it reads QFIKKAKEQE. A Glycyl lysine isopeptide (Lys-Gly) (interchain with G-Cter in SUMO2) cross-link involves residue Lys-67. A compositionally biased stretch (acidic residues) spans 71-81; sequence AEPEEQEEDSS. 5 positions are modified to phosphoserine: Ser-94, Ser-116, Ser-118, Ser-132, and Ser-133. Acidic residues-rich tracts occupy residues 112–122 and 131–144; these read VVGESDSEVEG and DSSE…DDEE. Residues 145 to 163 are compositionally biased toward basic and acidic residues; the sequence is IERRRGMMRQRAQERKNEE. Residues 178-195 are compositionally biased toward acidic residues; that stretch reads ESESESEYEEYTDSEDEM. Lys-249 participates in a covalent cross-link: Glycyl lysine isopeptide (Lys-Gly) (interchain with G-Cter in SUMO2). Thr-267 is modified (phosphothreonine). Lys-357 is covalently cross-linked (Glycyl lysine isopeptide (Lys-Gly) (interchain with G-Cter in SUMO2)). Ser-361 carries the phosphoserine modification. Residues Lys-371, Lys-381, Lys-415, and Lys-418 each participate in a glycyl lysine isopeptide (Lys-Gly) (interchain with G-Cter in SUMO2) cross-link. Position 432 is a phosphoserine (Ser-432).

It belongs to the MFAP1 family. Component of the spliceosome B complex. Interacts with PRPF38A (via N-terminal interaction domain).

The protein localises to the nucleus. Its function is as follows. Involved in pre-mRNA splicing as a component of the spliceosome. The chain is Microfibrillar-associated protein 1 from Homo sapiens (Human).